A 502-amino-acid chain; its full sequence is ATP synthase subunit alpha (502 aa).

Residue 169 to 176 participates in ATP binding; that stretch reads GDRQTGKT.

Belongs to the ATPase alpha/beta chains family. As to quaternary structure, F-type ATPases have 2 components, CF(1) - the catalytic core - and CF(0) - the membrane proton channel. CF(1) has five subunits: alpha(3), beta(3), gamma(1), delta(1), epsilon(1). CF(0) has three main subunits: a(1), b(2) and c(9-12). The alpha and beta chains form an alternating ring which encloses part of the gamma chain. CF(1) is attached to CF(0) by a central stalk formed by the gamma and epsilon chains, while a peripheral stalk is formed by the delta and b chains.

It is found in the cell membrane. It catalyses the reaction ATP + H2O + 4 H(+)(in) = ADP + phosphate + 5 H(+)(out). Produces ATP from ADP in the presence of a proton gradient across the membrane. The alpha chain is a regulatory subunit. In Bacillus sp. (strain PS3), this protein is ATP synthase subunit alpha.